The following is a 109-amino-acid chain: Transcription initiation factor IIA subunit 2 (109 aa).

This sequence belongs to the TFIIA subunit 2 family. TFIIA is a heterodimer of the large unprocessed subunit 1 and a small subunit gamma. It was originally believed to be a heterotrimer of an alpha (p35), a beta (p19) and a gamma subunit (p12). Interacts with NCOA6 general coactivator. TFIIA forms a complex with TBP. Interacts with HSF1 (via transactivation domain). Part of TBP-based Pol II pre-initiation complex (PIC), in which Pol II core assembles with general transcription factors and other specific initiation factors including GTF2E1, GTF2E2, GTF2F1, GTF2F2, TCEA1, ERCC2, ERCC3, GTF2H2, GTF2H3, GTF2H4, GTF2H5, GTF2A1, GTF2A2, GTF2B and TBP; this large multi-subunit PIC complex mediates DNA unwinding and targets Pol II core to the transcription start site where the first phosphodiester bond forms.

It localises to the nucleus. Functionally, TFIIA is a component of the transcription machinery of RNA polymerase II and plays an important role in transcriptional activation. TFIIA in a complex with TBP mediates transcriptional activity. This is Transcription initiation factor IIA subunit 2 (Gtf2a2) from Rattus norvegicus (Rat).